Reading from the N-terminus, the 396-residue chain is Ribosomal RNA large subunit methyltransferase I (396 aa).

Residues 2 to 79 (AIRIKLKPGR…REEEIDREFF (78 aa)) form the PUA domain.

The protein belongs to the methyltransferase superfamily. RlmI family.

Its subcellular location is the cytoplasm. It carries out the reaction cytidine(1962) in 23S rRNA + S-adenosyl-L-methionine = 5-methylcytidine(1962) in 23S rRNA + S-adenosyl-L-homocysteine + H(+). Specifically methylates the cytosine at position 1962 (m5C1962) of 23S rRNA. This is Ribosomal RNA large subunit methyltransferase I from Shewanella oneidensis (strain ATCC 700550 / JCM 31522 / CIP 106686 / LMG 19005 / NCIMB 14063 / MR-1).